We begin with the raw amino-acid sequence, 162 residues long: Ribosomal RNA large subunit methyltransferase H (162 aa).

Residues Leu-78, Gly-109, and Leu-128–Leu-133 contribute to the S-adenosyl-L-methionine site.

This sequence belongs to the RNA methyltransferase RlmH family. In terms of assembly, homodimer.

Its subcellular location is the cytoplasm. The enzyme catalyses pseudouridine(1915) in 23S rRNA + S-adenosyl-L-methionine = N(3)-methylpseudouridine(1915) in 23S rRNA + S-adenosyl-L-homocysteine + H(+). Functionally, specifically methylates the pseudouridine at position 1915 (m3Psi1915) in 23S rRNA. In Psychrobacter sp. (strain PRwf-1), this protein is Ribosomal RNA large subunit methyltransferase H.